The primary structure comprises 177 residues: uncharacterized protein (177 aa).

This is an uncharacterized protein from Acanthamoeba polyphaga (Amoeba).